The chain runs to 399 residues: Elongation factor Tu (399 aa).

The region spanning 10-209 is the tr-type G domain; sequence KPHVNIGTIG…AVDSYIPTPT (200 aa). The segment at 19 to 26 is G1; the sequence is GHVDHGKT. 19–26 lines the GTP pocket; it reads GHVDHGKT. Position 26 (T26) interacts with Mg(2+). The tract at residues 60–64 is G2; that stretch reads GITIA. Positions 81-84 are G3; that stretch reads DCPG. GTP is bound by residues 81–85 and 136–139; these read DCPGH and NKAD. A G4 region spans residues 136–139; sequence NKAD. The interval 174-176 is G5; that stretch reads SAL.

The protein belongs to the TRAFAC class translation factor GTPase superfamily. Classic translation factor GTPase family. EF-Tu/EF-1A subfamily. In terms of assembly, monomer.

The protein localises to the cytoplasm. It catalyses the reaction GTP + H2O = GDP + phosphate + H(+). Functionally, GTP hydrolase that promotes the GTP-dependent binding of aminoacyl-tRNA to the A-site of ribosomes during protein biosynthesis. This is Elongation factor Tu from Campylobacter jejuni (strain RM1221).